Reading from the N-terminus, the 285-residue chain is Bifunctional protein FolD (285 aa).

NADP(+) contacts are provided by residues 165–167 (GRS) and Ser-190.

Belongs to the tetrahydrofolate dehydrogenase/cyclohydrolase family. As to quaternary structure, homodimer.

The catalysed reaction is (6R)-5,10-methylene-5,6,7,8-tetrahydrofolate + NADP(+) = (6R)-5,10-methenyltetrahydrofolate + NADPH. The enzyme catalyses (6R)-5,10-methenyltetrahydrofolate + H2O = (6R)-10-formyltetrahydrofolate + H(+). Its pathway is one-carbon metabolism; tetrahydrofolate interconversion. Its function is as follows. Catalyzes the oxidation of 5,10-methylenetetrahydrofolate to 5,10-methenyltetrahydrofolate and then the hydrolysis of 5,10-methenyltetrahydrofolate to 10-formyltetrahydrofolate. This Streptococcus pneumoniae (strain ATCC BAA-255 / R6) protein is Bifunctional protein FolD.